The sequence spans 391 residues: Phosphoglycerate kinase (391 aa).

Residues Asp-21–Asn-23, Arg-36, His-59–Arg-62, Arg-113, and Arg-146 each bind substrate. Residues Lys-197, Glu-319, and Gly-345 to Thr-348 each bind ATP.

This sequence belongs to the phosphoglycerate kinase family. In terms of assembly, monomer.

The protein localises to the cytoplasm. It carries out the reaction (2R)-3-phosphoglycerate + ATP = (2R)-3-phospho-glyceroyl phosphate + ADP. It participates in carbohydrate degradation; glycolysis; pyruvate from D-glyceraldehyde 3-phosphate: step 2/5. The polypeptide is Phosphoglycerate kinase (Shewanella baltica (strain OS195)).